The following is a 311-amino-acid chain: DNA-directed RNA polymerase subunit alpha (311 aa).

An alpha N-terminal domain (alpha-NTD) region spans residues 1 to 227; that stretch reads MNNISIKCLK…DLFTLLINNK (227 aa). The segment at 242 to 311 is alpha C-terminal domain (alpha-CTD); the sequence is ISIEPYTNIA…LKNKLGIILK (70 aa).

It belongs to the RNA polymerase alpha chain family. As to quaternary structure, in plastids the minimal PEP RNA polymerase catalytic core is composed of four subunits: alpha, beta, beta', and beta''. When a (nuclear-encoded) sigma factor is associated with the core the holoenzyme is formed, which can initiate transcription.

The protein localises to the plastid. Its subcellular location is the chloroplast. The catalysed reaction is RNA(n) + a ribonucleoside 5'-triphosphate = RNA(n+1) + diphosphate. Functionally, DNA-dependent RNA polymerase catalyzes the transcription of DNA into RNA using the four ribonucleoside triphosphates as substrates. This is DNA-directed RNA polymerase subunit alpha from Phaeodactylum tricornutum (strain CCAP 1055/1).